The chain runs to 381 residues: Queuine tRNA-ribosyltransferase (381 aa).

Aspartate 96 acts as the Proton acceptor in catalysis. Substrate contacts are provided by residues 96 to 100, aspartate 150, glutamine 193, and glycine 220; that span reads DSGGF. Positions 251-257 are RNA binding; that stretch reads GVGSPDA. Residue aspartate 270 is the Nucleophile of the active site. Residues 275 to 279 form an RNA binding; important for wobble base 34 recognition region; that stretch reads TRIAR. Residues cysteine 308, cysteine 310, cysteine 313, and histidine 339 each coordinate Zn(2+).

The protein belongs to the queuine tRNA-ribosyltransferase family. In terms of assembly, homodimer. Within each dimer, one monomer is responsible for RNA recognition and catalysis, while the other monomer binds to the replacement base PreQ1. Zn(2+) is required as a cofactor.

It catalyses the reaction 7-aminomethyl-7-carbaguanine + guanosine(34) in tRNA = 7-aminomethyl-7-carbaguanosine(34) in tRNA + guanine. The protein operates within tRNA modification; tRNA-queuosine biosynthesis. Catalyzes the base-exchange of a guanine (G) residue with the queuine precursor 7-aminomethyl-7-deazaguanine (PreQ1) at position 34 (anticodon wobble position) in tRNAs with GU(N) anticodons (tRNA-Asp, -Asn, -His and -Tyr). Catalysis occurs through a double-displacement mechanism. The nucleophile active site attacks the C1' of nucleotide 34 to detach the guanine base from the RNA, forming a covalent enzyme-RNA intermediate. The proton acceptor active site deprotonates the incoming PreQ1, allowing a nucleophilic attack on the C1' of the ribose to form the product. After dissociation, two additional enzymatic reactions on the tRNA convert PreQ1 to queuine (Q), resulting in the hypermodified nucleoside queuosine (7-(((4,5-cis-dihydroxy-2-cyclopenten-1-yl)amino)methyl)-7-deazaguanosine). In Bacillus velezensis (strain DSM 23117 / BGSC 10A6 / LMG 26770 / FZB42) (Bacillus amyloliquefaciens subsp. plantarum), this protein is Queuine tRNA-ribosyltransferase.